A 755-amino-acid polypeptide reads, in one-letter code: Cellulose synthase-like protein B3 (755 aa).

A run of 2 helical transmembrane segments spans residues 24-44 (VVDL…ILLM) and 51-71 (WVVA…ITSI). Active-site residues include aspartate 136 and aspartate 461. Helical transmembrane passes span 534–556 (YLYI…LPAY), 569–589 (VYLG…LWEF), 615–635 (LFSI…VFIV), 674–694 (FLPG…CSVG), 702–722 (GSGL…LPFL), and 733–753 (IPWS…VFSV).

Belongs to the glycosyltransferase 2 family. Plant cellulose synthase-like B subfamily. In terms of tissue distribution, expressed in young seedlings, primarily in the vascular tissue.

The protein localises to the golgi apparatus membrane. In terms of biological role, thought to be a Golgi-localized beta-glycan synthase that polymerize the backbones of noncellulosic polysaccharides (hemicelluloses) of plant cell wall. This is Cellulose synthase-like protein B3 (CSLB3) from Arabidopsis thaliana (Mouse-ear cress).